Reading from the N-terminus, the 320-residue chain is Glycerol-3-phosphate dehydrogenase [NAD(P)+] (320 aa).

NADPH-binding residues include S14, F15, R35, and K109. K109 and G137 together coordinate sn-glycerol 3-phosphate. A141 is a binding site for NADPH. 5 residues coordinate sn-glycerol 3-phosphate: K192, D248, S258, R259, and N260. The active-site Proton acceptor is the K192. An NADPH-binding site is contributed by R259. L283 and E285 together coordinate NADPH.

This sequence belongs to the NAD-dependent glycerol-3-phosphate dehydrogenase family.

The protein localises to the cytoplasm. The catalysed reaction is sn-glycerol 3-phosphate + NAD(+) = dihydroxyacetone phosphate + NADH + H(+). It carries out the reaction sn-glycerol 3-phosphate + NADP(+) = dihydroxyacetone phosphate + NADPH + H(+). The protein operates within membrane lipid metabolism; glycerophospholipid metabolism. In terms of biological role, catalyzes the reduction of the glycolytic intermediate dihydroxyacetone phosphate (DHAP) to sn-glycerol 3-phosphate (G3P), the key precursor for phospholipid synthesis. This Rickettsia typhi (strain ATCC VR-144 / Wilmington) protein is Glycerol-3-phosphate dehydrogenase [NAD(P)+].